The chain runs to 363 residues: MSEAVTRIHVGGTAGTDPYEVLVGRQLLGELAGLIGDRVKRVAVVHPEALAETGEALRADLAEQGYEAVAIQVPNAEEAKTVEVAAYCWKALGQSGFTRTDVIVGVGGGATTDLAGFVAATWLRGVRWIAVPTTVLGMVDAAVGGKTGINTAEGKNLVGAFHPPAGVLCDLAALDSLPVNDYVSGLAEIIKAGFIADPAILELIEADPQAARTPAGPHTAELIERSIKVKAEVVSGDLKESGLREILNYGHTLAHAIEKNERYKWRHGAAVSVGMHFAAELGRLAGRLDDATADRHRTVLESVGLPLHYRYDQWPKLLETMKVDKKSRGDLLRFIVLDGLAKPTVLEGPDPAVLLAAYGEVGE.

NAD(+) contacts are provided by residues 109–113 (GATTD), 133–134 (TT), lysine 146, and lysine 155. Zn(2+) contacts are provided by glutamate 188, histidine 251, and histidine 267.

Belongs to the sugar phosphate cyclases superfamily. Dehydroquinate synthase family. Requires NAD(+) as cofactor. Co(2+) is required as a cofactor. The cofactor is Zn(2+).

The protein localises to the cytoplasm. The catalysed reaction is 7-phospho-2-dehydro-3-deoxy-D-arabino-heptonate = 3-dehydroquinate + phosphate. The protein operates within metabolic intermediate biosynthesis; chorismate biosynthesis; chorismate from D-erythrose 4-phosphate and phosphoenolpyruvate: step 2/7. Functionally, catalyzes the conversion of 3-deoxy-D-arabino-heptulosonate 7-phosphate (DAHP) to dehydroquinate (DHQ). The polypeptide is 3-dehydroquinate synthase (Streptomyces avermitilis (strain ATCC 31267 / DSM 46492 / JCM 5070 / NBRC 14893 / NCIMB 12804 / NRRL 8165 / MA-4680)).